Here is a 399-residue protein sequence, read N- to C-terminus: Odorant receptor 42b (399 aa).

The Cytoplasmic segment spans residues 1–45; the sequence is MVFELIRPAPLTEQKRSRDGCIYLYRAMKFIGWLPPKQGVLRYVY. A helical membrane pass occupies residues 46–66; it reads LTWTLMTFVWCTTYLPLGFLG. The Extracellular segment spans residues 67-83; that stretch reads SYMTQIKSFSPGEFLTS. A helical transmembrane segment spans residues 84–104; the sequence is LQVCINAYGSSVKVAITYSML. Residues 105–140 are Cytoplasmic-facing; it reads WRLIKAKNILDQLDLRCTAMEEREKIHLVVARSNHA. Residues 141 to 161 traverse the membrane as a helical segment; that stretch reads FLIFTFVYCGYAGSTYLSSVL. The Extracellular segment spans residues 162 to 178; the sequence is SGRPPWQLYNPFIDWHD. A helical transmembrane segment spans residues 179–199; that stretch reads GTLKLWVASTLEYMVMSGAVL. Topologically, residues 200-268 are cytoplasmic; that stretch reads QDQLSDSYPL…AIIKPVIQGT (69 aa). Residues 269-289 traverse the membrane as a helical segment; sequence IFTQFLLIGLVLGFTLINVFF. Residues 290–292 are Extracellular-facing; it reads FSD. Residues 293-313 form a helical membrane-spanning segment; it reads IWTGIASFMFVITILLQTFPF. At 314 to 356 the chain is on the cytoplasmic side; sequence CYTCNLIMEDCESLTHAIFQSNWVDASRRYKTTLLYFLQNVQQ. Residues 357–377 traverse the membrane as a helical segment; it reads PIVFIAGGIFQISMSSNISVA. Over 378–399 the chain is Extracellular; sequence KFAFSVITITKQMNIADKFKTD.

Belongs to the insect chemoreceptor superfamily. Heteromeric odorant receptor channel (TC 1.A.69) family. Or2a subfamily. As to quaternary structure, interacts with Orco. Complexes exist early in the endomembrane system in olfactory sensory neurons (OSNs), coupling these complexes to the conserved ciliary trafficking pathway. In terms of tissue distribution, expressed in olfactory sensory neurons in the antenna.

The protein resides in the cell membrane. Odorant receptor which mediates acceptance or avoidance behavior, depending on its substrates. The odorant receptor repertoire encodes a large collection of odor stimuli that vary widely in identity, intensity, and duration. May form a complex with Orco to form odorant-sensing units, providing sensitive and prolonged odorant signaling and calcium permeability. Involved in the behavioral responses to ethyl acetate and pentyl acetate. The protein is Odorant receptor 42b (Or42b) of Drosophila melanogaster (Fruit fly).